Reading from the N-terminus, the 321-residue chain is uncharacterized protein (321 aa).

9 consecutive transmembrane segments (helical) span residues 10–28 (LWCS…EMSI), 41–63 (IALY…IWIY), 94–111 (NVAM…SMVH), 116–138 (LFYG…VWLL), 143–165 (FLFY…SNGV), 200–222 (NGVI…DIIF), 237–259 (PFII…VILA), 266–283 (YIIK…SIKI), and 293–315 (IMLS…KFFF).

This sequence belongs to the TerC family.

The protein localises to the cell membrane. This is an uncharacterized protein from Buchnera aphidicola subsp. Baizongia pistaciae (strain Bp).